Here is a 416-residue protein sequence, read N- to C-terminus: Squalene synthase (416 aa).

NADP(+) contacts are provided by Arg-52 and Arg-77. Residues Asp-80, Glu-83, and Asp-84 each contribute to the Mg(2+) site. Arg-218 serves as a coordination point for NADP(+). The helical transmembrane segment at 284-304 (SVFNFCAIPQVMAIATLAACY) threads the bilayer. Lys-315 and Arg-317 together coordinate NADP(+). Residues 384–404 (PIYLSFIMLLAALSWQYLSTL) form a helical membrane-spanning segment.

Belongs to the phytoene/squalene synthase family. Requires Mg(2+) as cofactor.

The protein resides in the endoplasmic reticulum membrane. The catalysed reaction is 2 (2E,6E)-farnesyl diphosphate + NADPH + H(+) = squalene + 2 diphosphate + NADP(+). The enzyme catalyses 2 (2E,6E)-farnesyl diphosphate + NADH + H(+) = squalene + 2 diphosphate + NAD(+). It catalyses the reaction presqualene diphosphate + NADH + H(+) = squalene + diphosphate + NAD(+). It carries out the reaction presqualene diphosphate + NADPH + H(+) = squalene + diphosphate + NADP(+). The catalysed reaction is 2 (2E,6E)-farnesyl diphosphate = presqualene diphosphate + diphosphate. It functions in the pathway terpene metabolism; lanosterol biosynthesis; lanosterol from farnesyl diphosphate: step 1/3. Its function is as follows. Catalyzes the condensation of 2 farnesyl pyrophosphate (FPP) moieties to form squalene. Proceeds in two distinct steps. In the first half-reaction, two molecules of FPP react to form the stable presqualene diphosphate intermediate (PSQPP), with concomitant release of a proton and a molecule of inorganic diphosphate. In the second half-reaction, PSQPP undergoes heterolysis, isomerization, and reduction with NADPH or NADH to form squalene. It is the first committed enzyme of the sterol biosynthesis pathway. The chain is Squalene synthase (Fdft1) from Mus musculus (Mouse).